Reading from the N-terminus, the 537-residue chain is Putative cysteine ligase BshC (537 aa).

The stretch at 422 to 450 forms a coiled coil; the sequence is IEKVEGMIEQQRRLNKDLLDEVAGNQNNI.

Belongs to the BshC family.

Involved in bacillithiol (BSH) biosynthesis. May catalyze the last step of the pathway, the addition of cysteine to glucosamine malate (GlcN-Mal) to generate BSH. This is Putative cysteine ligase BshC from Staphylococcus aureus (strain USA300).